The primary structure comprises 339 residues: UDP-N-acetylglucosamine--N-acetylmuramyl-(pentapeptide) pyrophosphoryl-undecaprenol N-acetylglucosamine transferase (339 aa).

Residues 11–13, asparagine 127, arginine 170, serine 188, isoleucine 235, and glutamine 280 each bind UDP-N-acetyl-alpha-D-glucosamine; that span reads TGG.

The protein belongs to the glycosyltransferase 28 family. MurG subfamily.

It is found in the cell inner membrane. The enzyme catalyses di-trans,octa-cis-undecaprenyl diphospho-N-acetyl-alpha-D-muramoyl-L-alanyl-D-glutamyl-meso-2,6-diaminopimeloyl-D-alanyl-D-alanine + UDP-N-acetyl-alpha-D-glucosamine = di-trans,octa-cis-undecaprenyl diphospho-[N-acetyl-alpha-D-glucosaminyl-(1-&gt;4)]-N-acetyl-alpha-D-muramoyl-L-alanyl-D-glutamyl-meso-2,6-diaminopimeloyl-D-alanyl-D-alanine + UDP + H(+). It participates in cell wall biogenesis; peptidoglycan biosynthesis. Cell wall formation. Catalyzes the transfer of a GlcNAc subunit on undecaprenyl-pyrophosphoryl-MurNAc-pentapeptide (lipid intermediate I) to form undecaprenyl-pyrophosphoryl-MurNAc-(pentapeptide)GlcNAc (lipid intermediate II). In Thermotoga neapolitana (strain ATCC 49049 / DSM 4359 / NBRC 107923 / NS-E), this protein is UDP-N-acetylglucosamine--N-acetylmuramyl-(pentapeptide) pyrophosphoryl-undecaprenol N-acetylglucosamine transferase.